A 519-amino-acid chain; its full sequence is MAAEREPPPLGDGKPTDFEELEDGEDLFTSTVSTLESSPSSPDPASFLAEDISTNSNGPKPAEVALDDDREDLFAEATEEVSLDSPEREPILSSETSPAVTPVTPTTLIAPRIESKSMSAPVIFDRSRDEIEEEANGDVFDIEIGVSDPEKVGDGMNAYMAYRVTTKTSLSMFSKSEFSVKRRFSDFLGLHSKLASKYLHVGYIVPPAPEKSIVGMTKVKVGKEDSSSTEFVEKRRAALERYLQRTVKHPTLLQDPDLRQFLESSELPRAVNTQALSGAGILRMVNKAADAVNKMTIKMNESDAWFEEKQQQFENQDQQLRKLHASVEALVCHRKELSANTAAFAKSAAMLGNSEDHTALSRALSQLAEVEEKIDQLHQEQAFADFYMFSELLSDYIRLIAAVKGVFDHRVKCWQKWEDAQITLLKKRETEAKMMVANKPDKIQQAKNEIREWEAKVQQGERDFEQISKTIRKEVGRFEKERVKDFKTVIIKYLESLVQTQQQLIKYWEAFLPEAKAIA.

Disordered regions lie at residues 1-20 (MAAE…DFEE) and 30-103 (STVS…VTPV). 2 stretches are compositionally biased toward low complexity: residues 30–44 (STVS…SPDP) and 93–103 (SSETSPAVTPV). S97 carries the phosphoserine modification. Phosphothreonine occurs at positions 101 and 104. S117 and S119 each carry phosphoserine. Positions 140-269 (FDIEIGVSDP…QFLESSELPR (130 aa)) constitute a PX domain. The a 1,2-diacyl-sn-glycero-3-phospho-(1D-myo-inositol-3-phosphate) site is built by R183, S185, K211, and R235. S185 carries the post-translational modification Phosphoserine. The interval 260 to 519 (QFLESSELPR…AFLPEAKAIA (260 aa)) is interaction with RhoG. S277 is subject to Phosphoserine. Residues 278 to 295 (GAGILRMVNKAADAVNKM) are membrane-binding amphipathic helix. A BAR domain is found at 299–519 (MNESDAWFEE…AFLPEAKAIA (221 aa)). At K469 the chain carries N6-acetyllysine.

This sequence belongs to the sorting nexin family. In terms of assembly, predominantly forms heterodimers with BAR domain-containing sorting nexins SNX5, SNX6 and SNX32; can self-associate to form homodimers. The heterodimers are proposed to self-assemble into helical arrays on the membrane to stabilize and expand local membrane curvature underlying endosomal tubule formation. Thought to be a component of the originally described retromer complex (also called SNX-BAR retromer) which is a pentamer containing the heterotrimeric retromer cargo-selective complex (CSC), also decribed as vacuolar protein sorting subcomplex (VPS) and a heterodimeric membrane-deforming subcomplex formed between SNX1 or SNX2 and SNX5 or SNX6 (also called SNX-BAR subcomplex); the respective CSC and SNX-BAR subcomplexes associate with low affinity. Interacts with SNX5, SNX6, SNX32, VPS26A, VPS29, VPS35, FNBP1, KALRN, RHOG (GDP-bound form).

Its subcellular location is the early endosome membrane. The protein localises to the cell projection. It localises to the lamellipodium. Functionally, involved in several stages of intracellular trafficking. Interacts with membranes containing phosphatidylinositol 3-phosphate (PtdIns(3P)) or phosphatidylinositol 3,5-bisphosphate (PtdIns(3,5)P2). Acts in part as component of the retromer membrane-deforming SNX-BAR subcomplex. The SNX-BAR retromer mediates retrograde transport of cargo proteins from endosomes to the trans-Golgi network (TGN) and is involved in endosome-to-plasma membrane transport for cargo protein recycling. The SNX-BAR subcomplex functions to deform the donor membrane into a tubular profile called endosome-to-TGN transport carrier (ETC). Can sense membrane curvature and has in vitro vesicle-to-membrane remodeling activity. Required for retrograde endosome-to-TGN transport of TGN38. Promotes KALRN- and RHOG-dependent but retromer-independent membrane remodeling such as lamellipodium formation; the function is dependent on GEF activity of KALRN. This chain is Sorting nexin-2 (SNX2), found in Bos taurus (Bovine).